The chain runs to 423 residues: Putative galacturan 1,4-alpha-galacturonidase C (423 aa).

Positions 1 to 20 (MRFSIISLVSLPLFLGLTYA) are cleaved as a signal peptide. Residues N100, N120, N150, N173, and N185 are each glycosylated (N-linked (GlcNAc...) asparagine). The active-site Proton donor is the D229. A disulfide bridge connects residues C231 and C248. An N-linked (GlcNAc...) asparagine glycan is attached at N245. The active site involves N252. N-linked (GlcNAc...) asparagine glycosylation is found at N344 and N362. C379 and C385 are joined by a disulfide. N-linked (GlcNAc...) asparagine glycosylation is present at N400. An intrachain disulfide couples C409 to C423.

This sequence belongs to the glycosyl hydrolase 28 family.

It is found in the secreted. It catalyses the reaction [(1-&gt;4)-alpha-D-galacturonosyl](n) + H2O = alpha-D-galacturonate + [(1-&gt;4)-alpha-D-galacturonosyl](n-1). Functionally, specific in hydrolyzing the terminal glycosidic bond of polygalacturonic acid and oligogalacturonates. The protein is Putative galacturan 1,4-alpha-galacturonidase C (rgxC) of Neosartorya fischeri (strain ATCC 1020 / DSM 3700 / CBS 544.65 / FGSC A1164 / JCM 1740 / NRRL 181 / WB 181) (Aspergillus fischerianus).